Consider the following 37-residue polypeptide: Large ribosomal subunit protein bL36c (37 aa).

It belongs to the bacterial ribosomal protein bL36 family.

The protein resides in the plastid. The protein localises to the chloroplast. The chain is Large ribosomal subunit protein bL36c from Angiopteris evecta (Mule's foot fern).